A 199-amino-acid chain; its full sequence is Thymidine kinase (199 aa).

ATP contacts are provided by residues G23–T30 and D95–Q98. E96 acts as the Proton acceptor in catalysis. Residues C152, C155, C184, and C187 each coordinate Zn(2+).

The protein belongs to the thymidine kinase family. As to quaternary structure, homotetramer.

It localises to the cytoplasm. The enzyme catalyses thymidine + ATP = dTMP + ADP + H(+). This chain is Thymidine kinase, found in Bacteroides fragilis (strain YCH46).